Consider the following 339-residue polypeptide: Uroporphyrinogen decarboxylase (339 aa).

Substrate contacts are provided by residues 21-25, Asp-71, Tyr-147, Ser-202, and His-315; that span reads RQAGR.

Belongs to the uroporphyrinogen decarboxylase family. Homodimer.

The protein localises to the cytoplasm. The enzyme catalyses uroporphyrinogen III + 4 H(+) = coproporphyrinogen III + 4 CO2. It functions in the pathway porphyrin-containing compound metabolism; protoporphyrin-IX biosynthesis; coproporphyrinogen-III from 5-aminolevulinate: step 4/4. In terms of biological role, catalyzes the decarboxylation of four acetate groups of uroporphyrinogen-III to yield coproporphyrinogen-III. This chain is Uroporphyrinogen decarboxylase, found in Helicobacter pylori (strain P12).